The primary structure comprises 572 residues: MRTSQYLLSTLKETPADAEVISHQLMLRAGMIRKLASGLYTWLPTGVRVLKKVENIVREEMNNAGAIEVSMPVVQPADLWQESGRWEQYGPELLRFVDRGERPFVLGPTHEEVITDLIRNELSSYKQLPLNFYQIQTKFRDEVRPRFGVMRSREFLMKDAYSFHTSQESLQETYDAMYAAYSKIFSRMGLDFRAVQADTGSIGGSASHEFQVLAQSGEDDVVFSDTSDYAANIELAEAIAPKEPRAAATQEMTLVDTPNAKTIAELVEQFNLPIKKTVKTLLVKAVEGSSFPLVALLVRGDHELNEVKAEKLPQVASPLTFATEEEIRAVVKAGPGSLGPVNMPIPVVIDRIVAAMSDFAAGANIDGKHYFGINWDRDVATPEVADIRNVVAGDPSPDGQGTLLIKRGIEVGHIFQLGTKYSEALKASVQGEDGRNQILTMGCYGIGVTRVVAAAIEQNYDERGIVWPDAIAPFQVAILPMNMHKSFRVQELAEKLYSELRAQGIEVLLDDRKERPGVMFADMELIGIPHTIVLGDRNLDNDDIEYKYRRNGEKQLIKTGDIVEYLVKQIKG.

The protein belongs to the class-II aminoacyl-tRNA synthetase family. ProS type 1 subfamily. As to quaternary structure, homodimer.

The protein localises to the cytoplasm. It catalyses the reaction tRNA(Pro) + L-proline + ATP = L-prolyl-tRNA(Pro) + AMP + diphosphate. Catalyzes the attachment of proline to tRNA(Pro) in a two-step reaction: proline is first activated by ATP to form Pro-AMP and then transferred to the acceptor end of tRNA(Pro). As ProRS can inadvertently accommodate and process non-cognate amino acids such as alanine and cysteine, to avoid such errors it has two additional distinct editing activities against alanine. One activity is designated as 'pretransfer' editing and involves the tRNA(Pro)-independent hydrolysis of activated Ala-AMP. The other activity is designated 'posttransfer' editing and involves deacylation of mischarged Ala-tRNA(Pro). The misacylated Cys-tRNA(Pro) is not edited by ProRS. This Shigella dysenteriae serotype 1 (strain Sd197) protein is Proline--tRNA ligase.